The following is a 360-amino-acid chain: Peptide chain release factor 1 (360 aa).

Glutamine 235 is modified (N5-methylglutamine). The tract at residues 285-311 (KRQQAQASERRNLLGSGDRSDRHRTYN) is disordered. The segment covering 292–308 (SERRNLLGSGDRSDRHR) has biased composition (basic and acidic residues).

The protein belongs to the prokaryotic/mitochondrial release factor family. In terms of processing, methylated by PrmC. Methylation increases the termination efficiency of RF1.

The protein localises to the cytoplasm. Its function is as follows. Peptide chain release factor 1 directs the termination of translation in response to the peptide chain termination codons UAG and UAA. This is Peptide chain release factor 1 from Hamiltonella defensa subsp. Acyrthosiphon pisum (strain 5AT).